A 365-amino-acid chain; its full sequence is 3-isopropylmalate dehydrogenase (365 aa).

78-91 is an NAD(+) binding site; that stretch reads GPKWDTLPAEERPE. Residues Arg-99, Arg-109, Arg-138, and Asp-227 each coordinate substrate. Asp-227, Asp-251, and Asp-255 together coordinate Mg(2+). An NAD(+)-binding site is contributed by 285 to 297; the sequence is GSAPDIAGKNIAN.

This sequence belongs to the isocitrate and isopropylmalate dehydrogenases family. LeuB type 1 subfamily. In terms of assembly, homodimer. Requires Mg(2+) as cofactor. Mn(2+) is required as a cofactor.

It localises to the cytoplasm. It carries out the reaction (2R,3S)-3-isopropylmalate + NAD(+) = 4-methyl-2-oxopentanoate + CO2 + NADH. It functions in the pathway amino-acid biosynthesis; L-leucine biosynthesis; L-leucine from 3-methyl-2-oxobutanoate: step 3/4. Its function is as follows. Catalyzes the oxidation of 3-carboxy-2-hydroxy-4-methylpentanoate (3-isopropylmalate) to 3-carboxy-4-methyl-2-oxopentanoate. The product decarboxylates to 4-methyl-2 oxopentanoate. The protein is 3-isopropylmalate dehydrogenase of Syntrophotalea carbinolica (strain DSM 2380 / NBRC 103641 / GraBd1) (Pelobacter carbinolicus).